The sequence spans 624 residues: MGRPTERRPAAATAAGVEVSVVLPAYNEARTIENTVRVTVETLESFLPADAFEVIVAEDGCDDETPEIADRLAAEDDRIRHYHSDDRLGRGGALERAFEAARGDTLVYFDTDLATDMRHLEELVERVRSGEYDAATGSRWMPDRVADRPRKRGVPSRAYNGLVRLFLRSDLRDHQCGFKAFSREAFEALRDDVEDNHWFWDTEMLVRAQRAGFRVAEFPVDWEPKGDTKVDLVRDILGMGSQILRTWWQLTVRPRITRRVTIVAGLLLTVLALALMTLYIDPSEVISVLGDADPALVAAAAVIYVVSWPLRGIRYREILRELGYREKAGFLTGAIFISQTGNLVFPARAGDAVRAYVVKARRNIPYPSGFASLAVERVFDLLTIAGLAGVVLVGLAATGGLDDIATVLATGVSGGSVDVSADDVRTAAYVATGVGVVAILGVLGIALSARADRNVVRAFVGRFSSDSYVELVAGVIEQFVSDLQAVAGNRAAFGRVGLTSLAIWTVDVVTAVVVLLALGVDIDPVVLVGVSFFAVSVGNLAKVLPLSPGGVGLYEIAFTVFMAALAPVTPAAALAAAVLDHAVKNAVTIVGGVGSMLSLNVSLTTAVEESAEVRDREHELADSK.

Aspartate 201 is an active-site residue. The next 8 membrane-spanning stretches (helical) occupy residues 260-280, 285-305, 381-401, 427-447, 496-518, 532-552, 556-576, and 587-607; these read VTIV…TLYI, VISV…VIYV, LLTI…TGGL, AAYV…GIAL, VGLT…LLAL, FFAV…GGVG, IAFT…ALAA, and VTIV…TTAV.

Belongs to the glycosyltransferase 2 family.

The protein localises to the cell membrane. Its pathway is cell surface structure biogenesis; S-layer biogenesis. Involved in the assembly of a N-linked pentasaccharide that decorates the S-layer glycoprotein and flagellins. Catalyzes the addition of the mannose found at position 5 of the pentasaccharide to its own distinct dolichol phosphate carrier. The protein is Glycosyltransferase AglD (aglD) of Haloferax volcanii (strain ATCC 29605 / DSM 3757 / JCM 8879 / NBRC 14742 / NCIMB 2012 / VKM B-1768 / DS2) (Halobacterium volcanii).